The following is a 141-amino-acid chain: MRLLLALFFVLALVSPSFTQVWSNCGTAADKFQITNVVLDPPTPVKGQDITISASGILDETVTGGNVAVKVKYGFITLINENVSICSSQDPLACPIAAGDYQKNMTEMIPSDAPSGKYTGNVVITDQNNAEIACIDVDINL.

Residues 1-19 (MRLLLALFFVLALVSPSFT) form the signal peptide. Asparagine 82 and asparagine 104 each carry an N-linked (GlcNAc...) asparagine glycan.

This sequence belongs to the NPC2 family. In terms of assembly, monomer.

Catalyzes the intermembrane transfer of phosphatidylglycerol and phosphatidylinositol. The sequence is that of Putative phosphatidylglycerol/phosphatidylinositol transfer protein DDB_G0278295 from Dictyostelium discoideum (Social amoeba).